Here is a 312-residue protein sequence, read N- to C-terminus: tRNA dimethylallyltransferase (312 aa).

11–18 is an ATP binding site; that stretch reads GATATGKT. 13 to 18 lines the substrate pocket; it reads TATGKT. The segment at 36–39 is interaction with substrate tRNA; it reads DSRQ.

The protein belongs to the IPP transferase family. Monomer. Mg(2+) serves as cofactor.

The enzyme catalyses adenosine(37) in tRNA + dimethylallyl diphosphate = N(6)-dimethylallyladenosine(37) in tRNA + diphosphate. Its function is as follows. Catalyzes the transfer of a dimethylallyl group onto the adenine at position 37 in tRNAs that read codons beginning with uridine, leading to the formation of N6-(dimethylallyl)adenosine (i(6)A). This chain is tRNA dimethylallyltransferase, found in Thermosynechococcus vestitus (strain NIES-2133 / IAM M-273 / BP-1).